We begin with the raw amino-acid sequence, 150 residues long: Putative esterase SSO1253 (150 aa).

This sequence belongs to the thioesterase PaaI family.

This chain is Putative esterase SSO1253, found in Saccharolobus solfataricus (strain ATCC 35092 / DSM 1617 / JCM 11322 / P2) (Sulfolobus solfataricus).